The sequence spans 274 residues: NH(3)-dependent NAD(+) synthetase (274 aa).

46–53 (GISGGQDS) is an ATP binding site. Position 52 (Asp52) interacts with Mg(2+). Position 140 (Arg140) interacts with deamido-NAD(+). Thr160 lines the ATP pocket. Position 165 (Glu165) interacts with Mg(2+). Residues Lys173 and Asp180 each coordinate deamido-NAD(+). Positions 189 and 211 each coordinate ATP. Position 260–261 (260–261 (HK)) interacts with deamido-NAD(+).

This sequence belongs to the NAD synthetase family. In terms of assembly, homodimer.

The enzyme catalyses deamido-NAD(+) + NH4(+) + ATP = AMP + diphosphate + NAD(+) + H(+). It functions in the pathway cofactor biosynthesis; NAD(+) biosynthesis; NAD(+) from deamido-NAD(+) (ammonia route): step 1/1. Functionally, catalyzes the ATP-dependent amidation of deamido-NAD to form NAD. Uses ammonia as a nitrogen source. The polypeptide is NH(3)-dependent NAD(+) synthetase (Nocardia farcinica (strain IFM 10152)).